The following is a 367-amino-acid chain: Fructose-1,6-bisphosphatase class 1 3 (367 aa).

Belongs to the FBPase class 1 family. As to quaternary structure, homotetramer.

The protein localises to the cytoplasm. The catalysed reaction is beta-D-fructose 1,6-bisphosphate + H2O = beta-D-fructose 6-phosphate + phosphate. The protein operates within carbohydrate biosynthesis; gluconeogenesis. The protein is Fructose-1,6-bisphosphatase class 1 3 of Paraburkholderia phymatum (strain DSM 17167 / CIP 108236 / LMG 21445 / STM815) (Burkholderia phymatum).